A 656-amino-acid chain; its full sequence is Replication protein A 70 kDa DNA-binding subunit A (656 aa).

A DNA-binding region (OB) is located at residues Ala225 to Leu307. Residues Cys516–Cys542 form a C4-type zinc finger.

Belongs to the replication factor A protein 1 family. Heterotrimer of RPA1, RPA2 and RPA3 (canonical replication protein A complex). Interacts with RPA2B. Expressed in root tips, roots, shoot apical meristem (SAM), young leaves, flag leaves and ears, and at lower levels in mature leaves.

The protein localises to the nucleus. Functionally, component of the replication protein A complex (RPA) required for DNA recombination, repair and replication. The activity of RPA is mediated by single-stranded DNA binding and protein interactions. Plays an essential role in meiotic and somatic DNA repair, but is dispensable for DNA replication and homologous recombination. Is essential for normal progression through meiosis in pollen mother cells. Is involved in repair of double-strand DNA breaks (DSBs) induced by genotoxic stresses. This Oryza sativa subsp. japonica (Rice) protein is Replication protein A 70 kDa DNA-binding subunit A (RPA1A).